The primary structure comprises 597 residues: MVDTLGNMRRTHTCNELSAASAGTEVVLAGWVQRRRDHGGVIFVDLRDREGITQVVFNPDREPAVHAKAHDIRNEYVICVKGKVEKRPDDMVNPKLTTGEIEVAASELAILNTAKTPPFMVEDRIDVSESIRLKHRFVDLRRPAMQKNLLARHRAGMAAREFLNSQGFLDIETPFLTRNTPEGARDYLVPSRVNPGAFYALPQSPQLFKQMLMVAGFDRYYQIVRCFRDEDLRADRQPEFTQIDLEMSFVGEEDVMAIGEGLVANVVRQVTGEAVDLPFSRMTYDQAMADYGLDKPDLRFDMKLVDITDIAAGCGFQVFSGAVKNGGIVKALNAKGCADFTRKELDDYTEFVAIYKARGLAWVKVREDGWQSPIAKFFTDDEKASMAQRLNMAVGDLVFFGADAASVVNDSLGNLRNRIGERLGLVDKNRMCFLWVTDFPFFEYDETEKRYQAKHHPFTAPHEADMEHLHTDPEAVRSRAYDLVLNGTEIGGGSIRIHNRQVQEKMFEALGLAPEDYTAKFGFLLDALDSGAPPHGGMAFGFDRLVMLLCGESSIREVIAFPKTQKAACALTDAPSPADKKQLDELFIKVTADINKE.

Glu-182 provides a ligand contact to L-aspartate. Positions 206–209 are aspartate; the sequence is QLFK. Residue Arg-228 coordinates L-aspartate. ATP contacts are provided by residues 228 to 230 and Gln-237; that span reads RDE. His-455 serves as a coordination point for L-aspartate. Glu-489 lines the ATP pocket. Arg-496 is an L-aspartate binding site. 541–544 is an ATP binding site; that stretch reads GFDR.

It belongs to the class-II aminoacyl-tRNA synthetase family. Type 1 subfamily. In terms of assembly, homodimer.

Its subcellular location is the cytoplasm. It carries out the reaction tRNA(Asx) + L-aspartate + ATP = L-aspartyl-tRNA(Asx) + AMP + diphosphate. Aspartyl-tRNA synthetase with relaxed tRNA specificity since it is able to aspartylate not only its cognate tRNA(Asp) but also tRNA(Asn). Reaction proceeds in two steps: L-aspartate is first activated by ATP to form Asp-AMP and then transferred to the acceptor end of tRNA(Asp/Asn). In Desulfosudis oleivorans (strain DSM 6200 / JCM 39069 / Hxd3) (Desulfococcus oleovorans), this protein is Aspartate--tRNA(Asp/Asn) ligase.